Reading from the N-terminus, the 235-residue chain is MSIEVVDVRKHEHHFGVYVVKFEDGTERLATKNLTPGKRVYGERLIKWRDEEYREWNPYRSKLAAAIVNGIKFIPIQEGTHMLYLGAASGTTPSHISDIVGERGLIYSVEFSPRVFREFIEKLVDQGRRNVVPILGDARFPYQYAHYVKGVDVVYIDVAQPAQAKILADNADYFLKPGGYVMLVIKAMSIDVTAPATETFKQEINTLKERGFEILETVHLEPYDTAHAMVIAKKK.

Residues 91-92 (TT), 110-111 (EF), 137-138 (DA), and 157-160 (DVAQ) each bind S-adenosyl-L-methionine.

The protein belongs to the methyltransferase superfamily. Fibrillarin family. Interacts with nop5. Component of box C/D small ribonucleoprotein (sRNP) particles that contain rpl7ae, FlpA and nop5, plus a guide RNA.

Involved in pre-rRNA and tRNA processing. Utilizes the methyl donor S-adenosyl-L-methionine to catalyze the site-specific 2'-hydroxyl methylation of ribose moieties in rRNA and tRNA. Site specificity is provided by a guide RNA that base pairs with the substrate. Methylation occurs at a characteristic distance from the sequence involved in base pairing with the guide RNA. This Pyrobaculum islandicum (strain DSM 4184 / JCM 9189 / GEO3) protein is Fibrillarin-like rRNA/tRNA 2'-O-methyltransferase.